The sequence spans 20 residues: M-poneritoxin-Ng1f (20 aa).

Lys-20 carries the post-translational modification Lysine amide.

As to expression, expressed by the venom gland.

It is found in the secreted. It localises to the target cell membrane. Its function is as follows. Has activity against Gram-positive bacteria. Has insecticidal and hemolytic activities. May act by disrupting the integrity of the bacterial cell membrane. The polypeptide is M-poneritoxin-Ng1f (Neoponera goeldii (Ponerine ant)).